The following is a 222-amino-acid chain: GTP cyclohydrolase 1 (222 aa).

Zn(2+) contacts are provided by Cys-111, His-114, and Cys-182.

The protein belongs to the GTP cyclohydrolase I family. In terms of assembly, homomer.

It catalyses the reaction GTP + H2O = 7,8-dihydroneopterin 3'-triphosphate + formate + H(+). The protein operates within cofactor biosynthesis; 7,8-dihydroneopterin triphosphate biosynthesis; 7,8-dihydroneopterin triphosphate from GTP: step 1/1. This chain is GTP cyclohydrolase 1, found in Salmonella gallinarum (strain 287/91 / NCTC 13346).